The following is a 278-amino-acid chain: 4-deoxy-L-threo-5-hexosulose-uronate ketol-isomerase (278 aa).

Zn(2+) contacts are provided by H196, H198, E203, and H245.

This sequence belongs to the KduI family. Requires Zn(2+) as cofactor.

The enzyme catalyses 5-dehydro-4-deoxy-D-glucuronate = 3-deoxy-D-glycero-2,5-hexodiulosonate. It participates in glycan metabolism; pectin degradation; 2-dehydro-3-deoxy-D-gluconate from pectin: step 4/5. Functionally, catalyzes the isomerization of 5-dehydro-4-deoxy-D-glucuronate to 3-deoxy-D-glycero-2,5-hexodiulosonate. This chain is 4-deoxy-L-threo-5-hexosulose-uronate ketol-isomerase, found in Yersinia pseudotuberculosis serotype O:1b (strain IP 31758).